The sequence spans 894 residues: Alanine--tRNA ligase (894 aa).

Belongs to the class-II aminoacyl-tRNA synthetase family.

It is found in the cytoplasm. It carries out the reaction tRNA(Ala) + L-alanine + ATP = L-alanyl-tRNA(Ala) + AMP + diphosphate. In terms of biological role, catalyzes the attachment of alanine to tRNA(Ala) in a two-step reaction: alanine is first activated by ATP to form Ala-AMP and then transferred to the acceptor end of tRNA(Ala). Also edits incorrectly charged Ser-tRNA(Ala) and Gly-tRNA(Ala) via its editing domain. This is Alanine--tRNA ligase (alaS) from Leuconostoc citreum (strain KM20).